We begin with the raw amino-acid sequence, 319 residues long: Acetyl esterase (319 aa).

Residues 91-93 (HGG) carry the Involved in the stabilization of the negatively charged intermediate by the formation of the oxyanion hole motif. Active-site residues include S165, D262, and H292.

It belongs to the 'GDXG' lipolytic enzyme family. As to quaternary structure, homodimer. Interacts with MalT and MelA.

Its subcellular location is the cytoplasm. Functionally, displays esterase activity towards short chain fatty esters (acyl chain length of up to 8 carbons). Able to hydrolyze triacetylglycerol (triacetin) and tributyrylglycerol (tributyrin), but not trioleylglycerol (triolein) or cholesterol oleate. Negatively regulates MalT activity by antagonizing maltotriose binding. Inhibits MelA galactosidase activity. The chain is Acetyl esterase from Escherichia coli O8 (strain IAI1).